A 147-amino-acid chain; its full sequence is Putative toxin MJ0142 (147 aa).

Belongs to the UPF0332 family.

Putative toxin component of a putative type VII toxin-antitoxin (TA) system. Its cognate antitoxin might be MJ0141. The polypeptide is Putative toxin MJ0142 (Methanocaldococcus jannaschii (strain ATCC 43067 / DSM 2661 / JAL-1 / JCM 10045 / NBRC 100440) (Methanococcus jannaschii)).